The following is a 92-amino-acid chain: MARSQKKGPFVDLHLLKKVDAVRATSDKRPIKTWSRRSTILPDFIGLTIAVHNGRTHVPVYVSENMVGHKLGEFSLTRTFKGHAADKKAKKK.

It belongs to the universal ribosomal protein uS19 family.

Protein S19 forms a complex with S13 that binds strongly to the 16S ribosomal RNA. The chain is Small ribosomal subunit protein uS19 from Chromobacterium violaceum (strain ATCC 12472 / DSM 30191 / JCM 1249 / CCUG 213 / NBRC 12614 / NCIMB 9131 / NCTC 9757 / MK).